Consider the following 495-residue polypeptide: MIIGYVVGSATTQEANVLLEKKVRSGYYVTLEYDDEKVLGLVTLITTGSPLVDDSLNDIELVQRIKQMGNKIPIYMKAKVKLLCKLDGKLSQPDLPPVAGTPVRLATNEELSTIFSEGTIRIGKLIGSDVEVRIRVNALTRHLAILAATGSGKSNTVAVLSSRLSEVFGSVLIFDYHGEYYESEIKNLNNIEPKINPLNLTPDEFATLLEIRENATIQYRILRRAFKSFLEETKEKLKNGNVNYNELNNNFRNLILKKVDEVSKNEKRKDSKDEVINKIEDFLDRYSEIIDFTAGDVVDKIKIGKVNVINLSSLDEDAIDAIVSHYLRKILTSRKENKMKRKIGLKFPVLVVIEEAHVLLSKDSNTLTKHWAGRIAREGRKFGVGLIIVSQRPKGIDENILSQMTNKIILKMVEPSDKKYVLETSDNLSEDIVEGLSALDTGEAVIVGNIVRMPAIVKIDKFEGKLAGSDPNLIEEWKKAKEEIEEHADVLNWGE.

Residues R141, 150–155, and 458–459 contribute to the ATP site; these read GSGKSN and KI.

The protein belongs to the HerA family. In terms of assembly, forms a hexamer or a heptamer. Interacts with Mre11.

The enzyme catalyses Couples ATP hydrolysis with the unwinding of duplex DNA at the replication fork by translocating in the 5'-3' direction. This creates two antiparallel DNA single strands (ssDNA). The leading ssDNA polymer is the template for DNA polymerase III holoenzyme which synthesizes a continuous strand.. It catalyses the reaction ATP + H2O = ADP + phosphate + H(+). It carries out the reaction Couples ATP hydrolysis with the unwinding of duplex DNA by translocating in the 3'-5' direction.. With respect to regulation, ATPase activity is slightly stimulated by either circular single- or double-stranded (ds)DNA with a weak preference for dsDNA. Helicase activity is stimulated by Mre11. Its function is as follows. Involved in DNA double-strand break (DSB) repair. Probably acts with NurA to stimulate resection of the 5' strand and produce the long 3' single-strand that is required for RadA loading. Has DNA-dependent ATPase activity and bidirectional DNA helicase activity. Loads on either a 3' or a 5' DNA tail for subsequent DNA unwinding. Can also unwind blunt-ended dsDNA, Holliday junction and splayed-arm DNA. The chain is DNA double-strand break repair helicase HerA from Sulfurisphaera tokodaii (strain DSM 16993 / JCM 10545 / NBRC 100140 / 7) (Sulfolobus tokodaii).